The sequence spans 84 residues: Protein myomixer (84 aa).

Topologically, residues 1–4 (MPTP) are cytoplasmic. The chain crosses the membrane as a helical span at residues 5–25 (LLPLLLRLLLSCLLLPAARLA). The Extracellular portion of the chain corresponds to 26–84 (RQYLLPLLRRLARRLGSQDMREALLGCLLFILSQRHSPDAGEASRVDRLERRERLGPQK). The AxLyCxL signature appears at 48 to 57 (ALLGCLLFIL). The interval 62 to 84 (SPDAGEASRVDRLERRERLGPQK) is disordered.

Belongs to the MYMX family. As to quaternary structure, interacts with MYMK.

It is found in the cell membrane. Myoblast-specific protein that mediates myoblast fusion, an essential step for the formation of multi-nucleated muscle fibers. Involved in membrane fusion downstream of the lipid mixing step mediated by MYMK. Acts by generating membrane stresses via its extracellular C-terminus, leading to drive fusion pore formation. Acts independently of MYMK. Involved in skeletal muscle regeneration in response to injury by mediating the fusion of satellite cells, a population of muscle stem cells, with injured myofibers. The protein is Protein myomixer of Homo sapiens (Human).